The primary structure comprises 356 residues: UDP-N-acetylglucosamine--N-acetylmuramyl-(pentapeptide) pyrophosphoryl-undecaprenol N-acetylglucosamine transferase (356 aa).

Residues 12–14 (TGG), Asn-124, Arg-163, Ser-188, Ile-242, and Gln-287 contribute to the UDP-N-acetyl-alpha-D-glucosamine site.

The protein belongs to the glycosyltransferase 28 family. MurG subfamily.

Its subcellular location is the cell inner membrane. The enzyme catalyses di-trans,octa-cis-undecaprenyl diphospho-N-acetyl-alpha-D-muramoyl-L-alanyl-D-glutamyl-meso-2,6-diaminopimeloyl-D-alanyl-D-alanine + UDP-N-acetyl-alpha-D-glucosamine = di-trans,octa-cis-undecaprenyl diphospho-[N-acetyl-alpha-D-glucosaminyl-(1-&gt;4)]-N-acetyl-alpha-D-muramoyl-L-alanyl-D-glutamyl-meso-2,6-diaminopimeloyl-D-alanyl-D-alanine + UDP + H(+). Its pathway is cell wall biogenesis; peptidoglycan biosynthesis. Functionally, cell wall formation. Catalyzes the transfer of a GlcNAc subunit on undecaprenyl-pyrophosphoryl-MurNAc-pentapeptide (lipid intermediate I) to form undecaprenyl-pyrophosphoryl-MurNAc-(pentapeptide)GlcNAc (lipid intermediate II). In Pseudomonas syringae pv. tomato (strain ATCC BAA-871 / DC3000), this protein is UDP-N-acetylglucosamine--N-acetylmuramyl-(pentapeptide) pyrophosphoryl-undecaprenol N-acetylglucosamine transferase.